A 602-amino-acid chain; its full sequence is Glutamine--fructose-6-phosphate aminotransferase [isomerizing] (602 aa).

Residue cysteine 2 is the Nucleophile; for GATase activity of the active site. Positions 2-222 (CGIFGIIFAE…DGEYGYITAG (221 aa)) constitute a Glutamine amidotransferase type-2 domain. SIS domains lie at 284-422 (VANA…ALGH) and 452-592 (LAKR…PDKP). Residue lysine 597 is the For Fru-6P isomerization activity of the active site.

Homodimer.

The protein resides in the cytoplasm. It catalyses the reaction D-fructose 6-phosphate + L-glutamine = D-glucosamine 6-phosphate + L-glutamate. Functionally, catalyzes the first step in hexosamine metabolism, converting fructose-6P into glucosamine-6P using glutamine as a nitrogen source. In Pyrobaculum aerophilum (strain ATCC 51768 / DSM 7523 / JCM 9630 / CIP 104966 / NBRC 100827 / IM2), this protein is Glutamine--fructose-6-phosphate aminotransferase [isomerizing].